The primary structure comprises 169 residues: uncharacterized protein (169 aa).

Helical transmembrane passes span 25–45 (ALMG…MSYF), 57–77 (FFWV…FGVF), and 91–111 (LFLI…FLMV).

Belongs to the major facilitator superfamily. Allantoate permease family.

It localises to the membrane. This is an uncharacterized protein from Saccharomyces cerevisiae (strain ATCC 204508 / S288c) (Baker's yeast).